Here is a 620-residue protein sequence, read N- to C-terminus: Chaperone protein HtpG (620 aa).

Residues 1–339 are a; substrate-binding; it reads MAKHQFQTEI…SEDLPLNVSR (339 aa). A b region spans residues 340-546; the sequence is ELLQENRILA…ASDPMAGMAA (207 aa). Residues 547 to 620 are c; that stretch reads MFAQMGQEMP…RVASLATKAL (74 aa).

This sequence belongs to the heat shock protein 90 family. In terms of assembly, homodimer.

The protein localises to the cytoplasm. Molecular chaperone. Has ATPase activity. The sequence is that of Chaperone protein HtpG from Sulfurovum sp. (strain NBC37-1).